The following is a 248-amino-acid chain: tRNA (guanine-N(1)-)-methyltransferase (248 aa).

S-adenosyl-L-methionine is bound by residues Gly113 and Ile133–Leu138.

Belongs to the RNA methyltransferase TrmD family. As to quaternary structure, homodimer.

It is found in the cytoplasm. It carries out the reaction guanosine(37) in tRNA + S-adenosyl-L-methionine = N(1)-methylguanosine(37) in tRNA + S-adenosyl-L-homocysteine + H(+). Specifically methylates guanosine-37 in various tRNAs. In Shewanella woodyi (strain ATCC 51908 / MS32), this protein is tRNA (guanine-N(1)-)-methyltransferase.